Reading from the N-terminus, the 137-residue chain is Large ribosomal subunit protein uL16 (137 aa).

The segment covering 1 to 17 (MLQPKRTKFRKQQKGRN) has biased composition (basic residues). The disordered stretch occupies residues 1–24 (MLQPKRTKFRKQQKGRNRGLAQSG).

The protein belongs to the universal ribosomal protein uL16 family. In terms of assembly, part of the 50S ribosomal subunit.

In terms of biological role, binds 23S rRNA and is also seen to make contacts with the A and possibly P site tRNAs. The protein is Large ribosomal subunit protein uL16 of Dichelobacter nodosus (strain VCS1703A).